The following is a 212-amino-acid chain: Orotate phosphoribosyltransferase (212 aa).

5-phospho-alpha-D-ribose 1-diphosphate contacts are provided by residues Arg95, Lys99, His101, and 121–129; that span reads DDLITTGGS. Thr125 lines the orotate pocket.

Belongs to the purine/pyrimidine phosphoribosyltransferase family. PyrE subfamily. As to quaternary structure, homodimer. The cofactor is Mg(2+).

The catalysed reaction is orotidine 5'-phosphate + diphosphate = orotate + 5-phospho-alpha-D-ribose 1-diphosphate. It functions in the pathway pyrimidine metabolism; UMP biosynthesis via de novo pathway; UMP from orotate: step 1/2. Functionally, catalyzes the transfer of a ribosyl phosphate group from 5-phosphoribose 1-diphosphate to orotate, leading to the formation of orotidine monophosphate (OMP). This chain is Orotate phosphoribosyltransferase, found in Lactobacillus johnsonii (strain CNCM I-12250 / La1 / NCC 533).